The following is a 209-amino-acid chain: 2-phospho-L-lactate guanylyltransferase (209 aa).

The protein belongs to the CofC family. As to quaternary structure, homodimer.

The enzyme catalyses (2S)-2-phospholactate + GTP + H(+) = (2S)-lactyl-2-diphospho-5'-guanosine + diphosphate. Its pathway is cofactor biosynthesis; coenzyme F420 biosynthesis. Guanylyltransferase that catalyzes the activation of (2S)-2-phospholactate (2-PL) as (2S)-lactyl-2-diphospho-5'-guanosine, via the condensation of 2-PL with GTP. It is involved in the biosynthesis of coenzyme F420, a hydride carrier cofactor. This Halobacterium salinarum (strain ATCC 29341 / DSM 671 / R1) protein is 2-phospho-L-lactate guanylyltransferase.